Reading from the N-terminus, the 357-residue chain is NAD-dependent protein deacetylase HST2 (357 aa).

Residue serine 2 is modified to N-acetylserine. Positions 5-284 constitute a Deacetylase sirtuin-type domain; it reads TASTEMSVRK…EQLVEELGWQ (280 aa). Residues 32–52 and 115–118 contribute to the NAD(+) site; these read GAGI…TGLY and QNID. The active-site Proton acceptor is histidine 135. Zn(2+) contacts are provided by cysteine 143, cysteine 146, cysteine 170, and cysteine 173. NAD(+) is bound by residues 223–225, 248–250, and serine 270; these read GTS and NLE. Residues 317-329 show a composition bias toward basic and acidic residues; it reads LDQSEHESADKKD. The disordered stretch occupies residues 317-357; that stretch reads LDQSEHESADKKDKKLQRLNGHDSDEDGASNSSSSQKAAKE. Serine 340 bears the Phosphoserine mark.

It belongs to the sirtuin family. Class I subfamily. In terms of assembly, homotrimer. Monomer. Homotrimeric in its unliganded state. Undergoes a trimer-monomer transition upon acetyl-lysine substrate binding. Zn(2+) serves as cofactor.

It localises to the cytoplasm. The protein resides in the nucleus. The enzyme catalyses N(6)-acetyl-L-lysyl-[protein] + NAD(+) + H2O = 2''-O-acetyl-ADP-D-ribose + nicotinamide + L-lysyl-[protein]. Inhibited by ADP-ribose and nicotinamide. NAD-dependent histone deacetylase that is involved in nuclear silencing events. Derepresses subtelomeric silencing and increases repression in nucleolar (rDNA) silencing. Its function is negatively regulated by active nuclear export. This chain is NAD-dependent protein deacetylase HST2 (HST2), found in Saccharomyces cerevisiae (strain ATCC 204508 / S288c) (Baker's yeast).